A 386-amino-acid polypeptide reads, in one-letter code: Acyl-CoA ligase lcsD (386 aa).

Residues 62–132 (ELEQTLLAIQ…ELLPACKIIQ (71 aa)) form an SBD1 region. ATP is bound at residue 107–115 (AVGASGISK). Positions 133–195 (GYGMTETTGV…LRSPSVVIGY (63 aa)) are SBD2. Position 137 (Thr137) interacts with substrate. 2 residues coordinate ATP: Asp216 and Arg235. Residues 243–245 (RGL) and 313–316 (HLDG) each bind CoA. Lys331 is a binding site for ATP. The segment at 352–386 (REKAANGVHKVHVNGVKRPEKMEVFDLSSDDEDDD) is disordered.

This sequence belongs to the ATP-dependent AMP-binding enzyme family.

The protein operates within secondary metabolite biosynthesis. Acyl-CoA ligase; part of the gene cluster that mediates the biosynthesis of the lipopeptide antibiotics leucinostatins that show extensive biological activities, including antimalarial, antiviral, antibacterial, antifungal, and antitumor activities, as well as phytotoxic. Leucinostatin A contains nine amino acid residues, including the unusual amino acid 4-methyl-L-proline (MePro), 2-amino-6-hydroxy-4-methyl-8-oxodecanoic acid (AHyMeOA), 3-hydroxyleucine (HyLeu), alpha-aminoisobutyric acid (AIB), beta-Ala, a 4-methylhex-2-enoic acid at the N-terminus as well as a N1,N1-dimethylpropane-1,2-diamine (DPD) at the C-terminus. The biosynthesis of leucinostatins is probably initiated with the assembly of 4-methylhex-2-enoic acid by a reducing PKS. Two reducing polyketide synthases, lcsB and lcsC, have been identified in the cluster and it is not clear which is the one that assembles 4-methylhex-2-enoic acid since both contain KS, AT, DH, cMT, ER, KR and ACP domains. The polyketide residue might be transferred to the NRPS lcsA, mediated by two additional enzymes, the acyl-CoA ligase lcsD and the thioesterase lcsE. The linear polyketide carboxylic acid, which is released from PKS, is converted to a CoA thioester by lcsD, and then lcsE hydrolyzes the thiol bond and shuttles the polyketide intermediate to lcsA. The C domain of the first module catalyzed the condensation of 4-methylhex-2-enoic acid and MePro carried by domain A1, followed by successive condensations of nine amino acids to trigger the elongation of the linear peptide. A5 and A6 domains of lcsA are proposed to incorporate leucine, A2 AHyMeOA, and A3 incorporates HyLeu. A4, A7 and A8 incorporate AIB. The AHyMeOA in leucinostatin A activated by the A2 might be produced by the second PKS (lcsB or lcsC) present within the cluster. The MePro is probably produced via leucine cyclization and may originate from a separate pathway, independent of the cluster. Another nonproteinogenic amino acid, beta-Ala, could be produced by an aspartic acid decarboxylase also localized outside of the cluster. Two candidates are VFPBJ_01400 and VFPBJ_10476. The final peptide scaffold may be released by the NAD(P)H-dependent thioester reductase (TE) at the C-terminal region of lcsA. Transamination of the lcsA product by the transaminase lcsP may produce DPD at the C-terminus. Further hydroxylation steps performed alternatively by the cytochrome P450 monooxygenases lcsI, lcsK and lcsN then yield the non-methylated leucinostatins precursor. It is also possible that leucines can be hydroxylated prior to their incorporation into the peptide. Varying extents of methylation then lead to the formation of leucinostatins A and B. In Purpureocillium lilacinum (Paecilomyces lilacinus), this protein is Acyl-CoA ligase lcsD.